The following is a 151-amino-acid chain: 3-hydroxyacyl-[acyl-carrier-protein] dehydratase FabZ (151 aa).

H54 is an active-site residue.

Belongs to the thioester dehydratase family. FabZ subfamily.

It is found in the cytoplasm. It catalyses the reaction a (3R)-hydroxyacyl-[ACP] = a (2E)-enoyl-[ACP] + H2O. Functionally, involved in unsaturated fatty acids biosynthesis. Catalyzes the dehydration of short chain beta-hydroxyacyl-ACPs and long chain saturated and unsaturated beta-hydroxyacyl-ACPs. The protein is 3-hydroxyacyl-[acyl-carrier-protein] dehydratase FabZ of Klebsiella pneumoniae (strain 342).